The following is a 390-amino-acid chain: Multidrug resistance protein MdtL (390 aa).

Transmembrane regions (helical) follow at residues 4-24 (FLIC…MYLV), 42-62 (IAFS…GKVA), 69-89 (PVAI…SRAT), 93-113 (LFLT…VVAF), 131-151 (LLNG…HLIM), 158-178 (SLFY…VFIL), 199-221 (LLNR…ILTF), 245-265 (ALTA…LSVF), 269-289 (TLML…SLSS), 293-313 (VTLF…GVAM), 316-336 (ALGP…IAQV), and 353-375 (ALNM…LMTI).

The protein belongs to the major facilitator superfamily. DHA1 family. MdtL (TC 2.A.1.2.22) subfamily.

Its subcellular location is the cell inner membrane. This Citrobacter koseri (strain ATCC BAA-895 / CDC 4225-83 / SGSC4696) protein is Multidrug resistance protein MdtL.